The chain runs to 464 residues: NADH-quinone oxidoreductase subunit N 1 (464 aa).

14 helical membrane passes run 6 to 26 (ILPE…ELFL), 33 to 53 (FLSV…FFVN), 65 to 85 (VDAL…FVLL), 98 to 118 (YGEL…MISS), 122 to 142 (AIIF…VGLF), 155 to 175 (YLVI…LVYA), 192 to 212 (FALG…AVPF), 237 to 257 (IGMY…FPDW), 259 to 279 (YVVM…AYAQ), 285 to 305 (LLAY…TAVD), 312 to 332 (LLFY…VLAI), 356 to 376 (LASM…AAVF), 401 to 421 (ASLI…LYSG), and 436 to 456 (FTVL…HVVL).

This sequence belongs to the complex I subunit 2 family. NDH-1 is composed of 14 different subunits. Subunits NuoA, H, J, K, L, M, N constitute the membrane sector of the complex.

The protein localises to the cell inner membrane. It catalyses the reaction a quinone + NADH + 5 H(+)(in) = a quinol + NAD(+) + 4 H(+)(out). Functionally, NDH-1 shuttles electrons from NADH, via FMN and iron-sulfur (Fe-S) centers, to quinones in the respiratory chain. The immediate electron acceptor for the enzyme in this species is believed to be ubiquinone. Couples the redox reaction to proton translocation (for every two electrons transferred, four hydrogen ions are translocated across the cytoplasmic membrane), and thus conserves the redox energy in a proton gradient. The chain is NADH-quinone oxidoreductase subunit N 1 from Aquifex aeolicus (strain VF5).